Reading from the N-terminus, the 929-residue chain is Isoleucine--tRNA ligase (929 aa).

The 'HIGH' region signature appears at Pro-58–His-68. Glu-568 is an L-isoleucyl-5'-AMP binding site. Positions Lys-609–Ser-613 match the 'KMSKS' region motif. An ATP-binding site is contributed by Lys-612. The Zn(2+) site is built by Cys-892, Cys-895, Cys-912, and Cys-915.

The protein belongs to the class-I aminoacyl-tRNA synthetase family. IleS type 1 subfamily. As to quaternary structure, monomer. Zn(2+) serves as cofactor.

It localises to the cytoplasm. The enzyme catalyses tRNA(Ile) + L-isoleucine + ATP = L-isoleucyl-tRNA(Ile) + AMP + diphosphate. Catalyzes the attachment of isoleucine to tRNA(Ile). As IleRS can inadvertently accommodate and process structurally similar amino acids such as valine, to avoid such errors it has two additional distinct tRNA(Ile)-dependent editing activities. One activity is designated as 'pretransfer' editing and involves the hydrolysis of activated Val-AMP. The other activity is designated 'posttransfer' editing and involves deacylation of mischarged Val-tRNA(Ile). The protein is Isoleucine--tRNA ligase of Thiobacillus denitrificans (strain ATCC 25259 / T1).